A 122-amino-acid polypeptide reads, in one-letter code: Large ribosomal subunit protein uL14c (122 aa).

It belongs to the universal ribosomal protein uL14 family. In terms of assembly, part of the 50S ribosomal subunit.

It is found in the plastid. The protein resides in the chloroplast. Binds to 23S rRNA. This chain is Large ribosomal subunit protein uL14c, found in Cucumis sativus (Cucumber).